The primary structure comprises 203 residues: Large ribosomal subunit protein bL25 (203 aa).

Belongs to the bacterial ribosomal protein bL25 family. CTC subfamily. In terms of assembly, part of the 50S ribosomal subunit; part of the 5S rRNA/L5/L18/L25 subcomplex. Contacts the 5S rRNA. Binds to the 5S rRNA independently of L5 and L18.

Its function is as follows. This is one of the proteins that binds to the 5S RNA in the ribosome where it forms part of the central protuberance. The protein is Large ribosomal subunit protein bL25 of Rickettsia rickettsii (strain Iowa).